The sequence spans 250 residues: NH(3)-dependent NAD(+) synthetase (250 aa).

31 to 38 (GISGGIDS) serves as a coordination point for ATP. Position 37 (aspartate 37) interacts with Mg(2+). A deamido-NAD(+)-binding site is contributed by arginine 122. Residue threonine 142 coordinates ATP. Glutamate 147 contributes to the Mg(2+) binding site. 2 residues coordinate deamido-NAD(+): lysine 155 and aspartate 162. Positions 171 and 193 each coordinate ATP. 239 to 240 (HK) lines the deamido-NAD(+) pocket.

Belongs to the NAD synthetase family. In terms of assembly, homodimer.

It catalyses the reaction deamido-NAD(+) + NH4(+) + ATP = AMP + diphosphate + NAD(+) + H(+). It participates in cofactor biosynthesis; NAD(+) biosynthesis; NAD(+) from deamido-NAD(+) (ammonia route): step 1/1. Functionally, catalyzes the ATP-dependent amidation of deamido-NAD to form NAD. Uses ammonia as a nitrogen source. This chain is NH(3)-dependent NAD(+) synthetase, found in Alkaliphilus oremlandii (strain OhILAs) (Clostridium oremlandii (strain OhILAs)).